Consider the following 498-residue polypeptide: ATP synthase subunit beta, chloroplastic (498 aa).

Residue 172–179 coordinates ATP; sequence GGAGVGKT.

Belongs to the ATPase alpha/beta chains family. In terms of assembly, F-type ATPases have 2 components, CF(1) - the catalytic core - and CF(0) - the membrane proton channel. CF(1) has five subunits: alpha(3), beta(3), gamma(1), delta(1), epsilon(1). CF(0) has four main subunits: a(1), b(1), b'(1) and c(9-12).

The protein resides in the plastid. The protein localises to the chloroplast thylakoid membrane. It catalyses the reaction ATP + H2O + 4 H(+)(in) = ADP + phosphate + 5 H(+)(out). In terms of biological role, produces ATP from ADP in the presence of a proton gradient across the membrane. The catalytic sites are hosted primarily by the beta subunits. The polypeptide is ATP synthase subunit beta, chloroplastic (Nicotiana sp. (Tobacco)).